Consider the following 410-residue polypeptide: Testis-specific Y-encoded-like protein 6 (410 aa).

2 disordered regions span residues 1-31 (MSLPESPHSPATLDYALEDPHQGQRSREKSK) and 46-69 (PIVFPPPRLPEEGVAPQDPADGGH). Phosphoserine is present on S9. A compositionally biased stretch (basic and acidic residues) spans 18 to 31 (EDPHQGQRSREKSK).

It belongs to the nucleosome assembly protein (NAP) family.

This chain is Testis-specific Y-encoded-like protein 6 (TSPYL6), found in Homo sapiens (Human).